The sequence spans 166 residues: 16S rRNA aminocarboxypropyltransferase (166 aa).

The S-adenosyl-L-methionine site is built by Thr17, Ile62, Leu84, Tyr99, and Ser103.

It belongs to the TDD superfamily. TSR3 family.

The protein resides in the cytoplasm. The enzyme catalyses an N(1)-methylpseudouridine in rRNA + S-adenosyl-L-methionine = N(1)-methyl-N(3)-[(3S)-3-amino-3-carboxypropyl]pseudouridine in rRNA + S-methyl-5'-thioadenosine + H(+). In terms of biological role, aminocarboxypropyltransferase that catalyzes the aminocarboxypropyl transfer on pseudouridine corresponding to position 914 in M.jannaschii 16S rRNA. It constitutes the last step in biosynthesis of the hypermodified N1-methyl-N3-(3-amino-3-carboxypropyl) pseudouridine (m1acp3-Psi). This chain is 16S rRNA aminocarboxypropyltransferase, found in Saccharolobus islandicus (strain Y.N.15.51 / Yellowstone #2) (Sulfolobus islandicus).